Reading from the N-terminus, the 346-residue chain is Probable WRKY transcription factor 54 (346 aa).

The tract at residues 109–130 (PVSCNGGDSGESKKKRLGVGKG) is disordered. The segment covering 121–130 (KKKRLGVGKG) has biased composition (basic residues). The segment at residues 146–214 (VEAKSSEDRY…YIGYHTCTAN (69 aa)) is a DNA-binding region (WRKY). Residues 267-282 (VKEEQNNNGDQSKDYY) show a composition bias toward basic and acidic residues. The tract at residues 267–286 (VKEEQNNNGDQSKDYYEGSS) is disordered.

The protein belongs to the WRKY group III family. As to quaternary structure, interacts with WRKY30. Binds to BZR2/BES1 to cooperatively regulate the expression of target genes. Interacts with ASK7/BIN2. Phosphorylated and destabilized by ASK7/BIN2. In terms of tissue distribution, expressed in leaves.

The protein resides in the nucleus. Transcription factor. Interacts specifically with the W box (5'-(T)TGAC[CT]-3'), a frequently occurring elicitor-responsive cis-acting element. Together with WRKY70, negative regulator of developmental senescence, probably via the regulation of several senescence-associated markers genes. Positive regulator of EDS1-dependent defense against E.amylovora. In collaboration with WRKY70, prevents stomatal closure and, consequently, osmotic stress tolerance. Together with WRKY46 and WRKY70, promotes brassinosteroid (BR)-regulated plant growth but prevent drought response by modulating gene expression. Negative regulator of SA biosynthesis. Prevents defense response to the necrotrophic pathogens P.carotovorum and B.cinerea, but promotes defense against biotrophic/hemibiotrophic pathogens P.syringae pv. tomato (Pst) DC3000, probably by regulating negatively the jasmonic acid (JA)/ethylene (ET) and positively the salicylic acid (SA) signaling pathways. This Arabidopsis thaliana (Mouse-ear cress) protein is Probable WRKY transcription factor 54.